Reading from the N-terminus, the 631-residue chain is Phosphomethylpyrimidine synthase (631 aa).

Substrate is bound by residues N239, M268, Y297, H333, 353 to 355 (SRG), 394 to 397 (DGLR), and E433. Residue H437 participates in Zn(2+) binding. Y460 lines the substrate pocket. H501 serves as a coordination point for Zn(2+). The [4Fe-4S] cluster site is built by C581, C584, and C589.

It belongs to the ThiC family. Homodimer. [4Fe-4S] cluster is required as a cofactor.

The catalysed reaction is 5-amino-1-(5-phospho-beta-D-ribosyl)imidazole + S-adenosyl-L-methionine = 4-amino-2-methyl-5-(phosphooxymethyl)pyrimidine + CO + 5'-deoxyadenosine + formate + L-methionine + 3 H(+). It participates in cofactor biosynthesis; thiamine diphosphate biosynthesis. Catalyzes the synthesis of the hydroxymethylpyrimidine phosphate (HMP-P) moiety of thiamine from aminoimidazole ribotide (AIR) in a radical S-adenosyl-L-methionine (SAM)-dependent reaction. The protein is Phosphomethylpyrimidine synthase of Ralstonia nicotianae (strain ATCC BAA-1114 / GMI1000) (Ralstonia solanacearum).